Reading from the N-terminus, the 650-residue chain is Threonine--tRNA ligase (650 aa).

Residues 1-66 (MVQITLPDGS…DQDAKLAIVT (66 aa)) enclose the TGS domain. Residues 247-538 (DHRKIGRDLD…LIENHAGAMP (292 aa)) are catalytic. 3 residues coordinate Zn(2+): Cys-338, His-389, and His-515.

Belongs to the class-II aminoacyl-tRNA synthetase family. Homodimer. Zn(2+) is required as a cofactor.

It localises to the cytoplasm. The catalysed reaction is tRNA(Thr) + L-threonine + ATP = L-threonyl-tRNA(Thr) + AMP + diphosphate + H(+). Functionally, catalyzes the attachment of threonine to tRNA(Thr) in a two-step reaction: L-threonine is first activated by ATP to form Thr-AMP and then transferred to the acceptor end of tRNA(Thr). Also edits incorrectly charged L-seryl-tRNA(Thr). This Bordetella avium (strain 197N) protein is Threonine--tRNA ligase.